Here is a 177-residue protein sequence, read N- to C-terminus: ATP-dependent protease subunit HslV (177 aa).

The active site involves Thr-6. Na(+) contacts are provided by Ala-162, Cys-165, and Thr-168.

The protein belongs to the peptidase T1B family. HslV subfamily. In terms of assembly, a double ring-shaped homohexamer of HslV is capped on each side by a ring-shaped HslU homohexamer. The assembly of the HslU/HslV complex is dependent on binding of ATP.

The protein localises to the cytoplasm. It carries out the reaction ATP-dependent cleavage of peptide bonds with broad specificity.. With respect to regulation, allosterically activated by HslU binding. Protease subunit of a proteasome-like degradation complex believed to be a general protein degrading machinery. In Desulfovibrio desulfuricans (strain ATCC 27774 / DSM 6949 / MB), this protein is ATP-dependent protease subunit HslV.